The primary structure comprises 224 residues: Probable septum site-determining protein MinC (224 aa).

The protein belongs to the MinC family. As to quaternary structure, interacts with MinD and FtsZ.

Its function is as follows. Cell division inhibitor that blocks the formation of polar Z ring septums. Rapidly oscillates between the poles of the cell to destabilize FtsZ filaments that have formed before they mature into polar Z rings. Prevents FtsZ polymerization. The sequence is that of Probable septum site-determining protein MinC from Shewanella amazonensis (strain ATCC BAA-1098 / SB2B).